Reading from the N-terminus, the 433-residue chain is UPF0597 protein Spea_0809 (433 aa).

It belongs to the UPF0597 family.

The sequence is that of UPF0597 protein Spea_0809 from Shewanella pealeana (strain ATCC 700345 / ANG-SQ1).